The sequence spans 244 residues: Ethylene-responsive transcription factor 1 (244 aa).

The AP2/ERF DNA-binding region spans 106–164 (HYRGVRQRPWGKFAAEIRDPAKNGARVWLGTYESAEEAALAYGKAAFRMRGTKALLNFP). The segment covering 186–198 (SASSSVSSASESG) has biased composition (low complexity). The disordered stretch occupies residues 186 to 214 (SASSSVSSASESGSPKRRRKGVAAKQAEL).

It belongs to the ethylene-response factor family. Class 1 subfamily. Present in stems.

It is found in the nucleus. Involved in the regulation of gene expression during fruit ripening, by stress factors and by components of stress signal transduction pathways. Transcription factor that binds to the GCC-box pathogenesis-related promoter element. Probably acts as a transcriptional activator and may be involved in disease resistance pathways. The protein is Ethylene-responsive transcription factor 1 (ERF1) of Solanum lycopersicum (Tomato).